The primary structure comprises 119 residues: MSKQPRKQRTRTETAPLHERQRAVRATLSDELREEYGQRNVRVNAGDTVEVLRGDDAGHEAEVVTVDLTETVIHVEDVTIEKADGEEVPRPLDSSNLRVTELNLEDSKREARLEEGDEQ.

Belongs to the universal ribosomal protein uL24 family. Part of the 50S ribosomal subunit.

In terms of biological role, one of two assembly initiator proteins, it binds directly to the 5'-end of the 23S rRNA, where it nucleates assembly of the 50S subunit. Located at the polypeptide exit tunnel on the outside of the subunit. In Haloquadratum walsbyi (strain DSM 16790 / HBSQ001), this protein is Large ribosomal subunit protein uL24.